A 756-amino-acid polypeptide reads, in one-letter code: Phosphate transporter PHO1 homolog 6 (756 aa).

The SPX domain maps to 1-303 (MKFGKDFSSE…SRDAAKSYMK (303 aa)). Topologically, residues 1–355 (MKFGKDFSSE…KPKRERHRLT (355 aa)) are cytoplasmic. Residues 356-376 (FSTGFLGGCMFSLIVALVAIV) traverse the membrane as a helical segment. At 377–396 (RTRNILQDDGQKQYMNTMFP) the chain is on the extracellular side. The chain crosses the membrane as a helical span at residues 397–417 (LYSLFGFIMLHMTMYAANIYF). Over 418 to 440 (WRQYRVNYSFIFGFKQGTELGYK) the chain is Cytoplasmic. Residues 441-461 (QVLFVGFSIGALALLCVLANL) form a helical membrane-spanning segment. Topologically, residues 462–477 (DMETDPKTKDYQALTE) are extracellular. Residues 478 to 498 (LLPLFLLIAMFVVLVVPFNIF) form a helical membrane-spanning segment. At 499-631 (YRSSRFFFLT…DEKDRQIIWR (133 aa)) the chain is on the cytoplasmic side. In terms of domain architecture, EXS spans 562-756 (KDSQVFNTFL…SLPFNYEVDH (195 aa)). A helical transmembrane segment spans residues 632–652 (LLGGITSAMAVVFCTYWDLVY). Residues 653 to 676 (DWGLLNRTSKNPWLRDNLLIPHKE) are Extracellular-facing. The chain crosses the membrane as a helical span at residues 677-697 (VYVLAMILNVVLRFAWMQTVL). Topologically, residues 698 to 756 (DFKFESIHTQTVVAVVASLEIIRRGIWNFFRLENEHLNNVGKYRAFKAVSLPFNYEVDH) are cytoplasmic.

The protein belongs to the SYG1 (TC 2.A.94) family. As to expression, specifically expressed in anther connective tissue.

It is found in the cell membrane. Its function is as follows. May transport inorganic phosphate (Pi). This chain is Phosphate transporter PHO1 homolog 6 (PHO1-H6), found in Arabidopsis thaliana (Mouse-ear cress).